The chain runs to 441 residues: Polyketide methyltransferase ustM (441 aa).

A methyltransferase (CMeT) domain region spans residues 266–368 (LEVGAGLGGT…VRKLLRGGGF (103 aa)).

It belongs to the methyltransferase superfamily.

It participates in secondary metabolite biosynthesis. Polyketide methyltransferase; part of the gene cluster that mediates the biosynthesis of ustilaginoidins, dimeric gamma-naphthopyrones isolated from different fungal species. The first step in the biosynthesis of ustilaginoidins is the production of gamma-naphthopyrone precursor YWA1 by the non-reducing polyketide synthase ustP, via condensation of one acetyl-CoA starter unit with 6 malonyl-CoA units. YWA1 is then probably substrate of the ustZ to yield norrubrofusarin via a dehydration reaction. A key enzyme in the biosynthetic pathway is the laccase ustL, which catalyzes the oxidative dimerization of norrubrofusarin to ustilaginoidin A. It can produce the M- and P-atropisomers in varying amounts, depending on the reaction conditions. For the biosynthesis of 3-methylustilaginoid in derivatives such as chaetochromin A, a methylated derivative of YWA1 is required. The C-methylation is considered to be catalyzed by ustM, the phosphopantetheine attachment site of which indicates that it acts on the growing polyketide chain before release of the product. For the biosynthesis of chaetochromin A, it is assumed that saturation of the D2 double bond takes place before dimerization, and is probably catalyzed by an external reductase because no candidate gene was identified within the cluster. This chain is Polyketide methyltransferase ustM, found in Ustilaginoidea virens (Rice false smut fungus).